We begin with the raw amino-acid sequence, 412 residues long: 2,3-bisphosphoglycerate-independent phosphoglycerate mutase (412 aa).

It belongs to the BPG-independent phosphoglycerate mutase family. A-PGAM subfamily.

The catalysed reaction is (2R)-2-phosphoglycerate = (2R)-3-phosphoglycerate. Its pathway is carbohydrate degradation; glycolysis; pyruvate from D-glyceraldehyde 3-phosphate: step 3/5. Functionally, catalyzes the interconversion of 2-phosphoglycerate and 3-phosphoglycerate. This Methanobrevibacter smithii (strain ATCC 35061 / DSM 861 / OCM 144 / PS) protein is 2,3-bisphosphoglycerate-independent phosphoglycerate mutase.